A 407-amino-acid polypeptide reads, in one-letter code: Arginine biosynthesis bifunctional protein ArgJ (407 aa).

Substrate-binding residues include Thr-157, Lys-183, Thr-194, Glu-280, Asn-402, and Thr-407. Residue Thr-194 is the Nucleophile of the active site.

Belongs to the ArgJ family. In terms of assembly, heterotetramer of two alpha and two beta chains.

Its subcellular location is the cytoplasm. The enzyme catalyses N(2)-acetyl-L-ornithine + L-glutamate = N-acetyl-L-glutamate + L-ornithine. It catalyses the reaction L-glutamate + acetyl-CoA = N-acetyl-L-glutamate + CoA + H(+). It participates in amino-acid biosynthesis; L-arginine biosynthesis; L-ornithine and N-acetyl-L-glutamate from L-glutamate and N(2)-acetyl-L-ornithine (cyclic): step 1/1. The protein operates within amino-acid biosynthesis; L-arginine biosynthesis; N(2)-acetyl-L-ornithine from L-glutamate: step 1/4. In terms of biological role, catalyzes two activities which are involved in the cyclic version of arginine biosynthesis: the synthesis of N-acetylglutamate from glutamate and acetyl-CoA as the acetyl donor, and of ornithine by transacetylation between N(2)-acetylornithine and glutamate. The polypeptide is Arginine biosynthesis bifunctional protein ArgJ (Bacillus cereus (strain ATCC 10987 / NRS 248)).